A 348-amino-acid chain; its full sequence is tRNA (cytosine(34)-C(5))-methyltransferase, mitochondrial (348 aa).

Residues 139 to 145 (CAAPGGK), E162, D193, and D211 each bind S-adenosyl-L-methionine. The active-site Nucleophile is C265.

The protein belongs to the class I-like SAM-binding methyltransferase superfamily. RsmB/NOP family.

It is found in the mitochondrion matrix. It catalyses the reaction cytidine(34) in mitochondrial tRNA + S-adenosyl-L-methionine = 5-methylcytidine(34) in mitochondrial tRNA + S-adenosyl-L-homocysteine + H(+). Functionally, mitochondrial tRNA methyltransferase that mediates methylation of cytosine to 5-methylcytosine (m5C) at position 34 of mt-tRNA(Met). mt-tRNA(Met) methylation at cytosine(34) takes place at the wobble position of the anticodon and initiates the formation of 5-formylcytosine (f(5)c) at this position. mt-tRNA(Met) containing the f(5)c modification at the wobble position enables recognition of the AUA codon in addition to the AUG codon, expanding codon recognition in mitochondrial translation. The chain is tRNA (cytosine(34)-C(5))-methyltransferase, mitochondrial from Mus musculus (Mouse).